The following is a 210-amino-acid chain: Somatotropin (210 aa).

An N-terminal signal peptide occupies residues 1–22 (MGQVFLLMPVLLVSCFLSQGAA). Zn(2+) is bound at residue His38. A disulfide bridge links Cys71 with Cys183. Residue Glu192 participates in Zn(2+) binding. An intrachain disulfide couples Cys200 to Cys208.

This sequence belongs to the somatotropin/prolactin family.

It localises to the secreted. Growth hormone plays an important role in growth control and is involved in the regulation of several anabolic processes. Implicated as an osmoregulatory substance important for seawater adaptation. This Oncorhynchus tshawytscha (Chinook salmon) protein is Somatotropin (gh).